The following is a 772-amino-acid chain: Mitochondrial intermediate peptidase (772 aa).

Residues 1-33 constitute a mitochondrion transit peptide; the sequence is MLARPSTTVLARRPFFRFRGCLNEPRPTKARCL. Residue H556 coordinates Zn(2+). Residue E557 is part of the active site. 2 residues coordinate Zn(2+): H560 and H563.

The protein belongs to the peptidase M3 family. Zn(2+) serves as cofactor.

Its subcellular location is the mitochondrion matrix. It catalyses the reaction Release of an N-terminal octapeptide as second stage of processing of some proteins imported into the mitochondrion.. Cleaves proteins, imported into the mitochondrion, to their mature size. While most mitochondrial precursor proteins are processed to the mature form in one step by mitochondrial processing peptidase (MPP), the sequential cleavage by MIP of an octapeptide after initial processing by MPP is a required step for a subgroup of nuclear-encoded precursor proteins destined for the matrix or the inner membrane. The chain is Mitochondrial intermediate peptidase (OCT1) from Coprinopsis scobicola (Ink cap fungus).